The sequence spans 273 residues: Putative pyruvate, phosphate dikinase regulatory protein (273 aa).

Residue 149–156 participates in ADP binding; that stretch reads GPSRTSKT.

It belongs to the pyruvate, phosphate/water dikinase regulatory protein family. PDRP subfamily.

The catalysed reaction is N(tele)-phospho-L-histidyl/L-threonyl-[pyruvate, phosphate dikinase] + ADP = N(tele)-phospho-L-histidyl/O-phospho-L-threonyl-[pyruvate, phosphate dikinase] + AMP + H(+). It carries out the reaction N(tele)-phospho-L-histidyl/O-phospho-L-threonyl-[pyruvate, phosphate dikinase] + phosphate + H(+) = N(tele)-phospho-L-histidyl/L-threonyl-[pyruvate, phosphate dikinase] + diphosphate. Its function is as follows. Bifunctional serine/threonine kinase and phosphorylase involved in the regulation of the pyruvate, phosphate dikinase (PPDK) by catalyzing its phosphorylation/dephosphorylation. The polypeptide is Putative pyruvate, phosphate dikinase regulatory protein (Rickettsia bellii (strain RML369-C)).